The primary structure comprises 246 residues: uncharacterized protein (246 aa).

This is an uncharacterized protein from Escherichia coli O157:H7.